The sequence spans 352 residues: MANFSESKSMMAVFFMFFLLLLSSSSSSSSSSPILKKIFIESPSYAPNAFTFDSTDKGFYTSVQDGRVIKYEGPNSGFTDFAYASPFWNKAFCENSTDPEKRPLCGRTYDISYDYKNSQMYIVDGHYHLCVVGKEGGYATQLATSVQGVPFKWLYAVTVDQRTGIVYFTDVSSIHDDSPEGVEEIMNTSDRTGRLMKYDPSTKETTLLLKELHVPGGAEISADGSFVVVAEFLSNRIVKYWLEGPKKGSAEFLVTIPNPGNIKRNSDGHFWVSSSEELDGGQHGRVVSRGIKFDGFGNILQVIPLPPPYEGEHFEQIQEHDGLLYIGSLFHSSVGILVYDDHDNKGNSYVSS.

The signal sequence occupies residues Met-1 to Ser-31. N-linked (GlcNAc...) asparagine glycans are attached at residues Asn-95 and Asn-187.

Belongs to the strictosidine synthase family. In terms of assembly, monomer.

The protein localises to the vacuole. The catalysed reaction is 3alpha(S)-strictosidine + H2O = secologanin + tryptamine. It participates in alkaloid biosynthesis; 3alpha(S)-strictosidine biosynthesis; 3alpha(S)-strictosidine from secologanin and tryptamine: step 1/1. Functionally, catalyzes the stereospecific condensation of tryptamine with secologanin to form strictosidine, the key intermediate of indole alkaloid biosynthesis. The protein is Strictosidine synthase (STR1) of Catharanthus roseus (Madagascar periwinkle).